We begin with the raw amino-acid sequence, 498 residues long: ATP synthase subunit beta, chloroplastic (498 aa).

Residue 172–179 (GGAGVGKT) coordinates ATP.

This sequence belongs to the ATPase alpha/beta chains family. F-type ATPases have 2 components, CF(1) - the catalytic core - and CF(0) - the membrane proton channel. CF(1) has five subunits: alpha(3), beta(3), gamma(1), delta(1), epsilon(1). CF(0) has four main subunits: a(1), b(1), b'(1) and c(9-12).

It is found in the plastid. It localises to the chloroplast thylakoid membrane. It carries out the reaction ATP + H2O + 4 H(+)(in) = ADP + phosphate + 5 H(+)(out). Its function is as follows. Produces ATP from ADP in the presence of a proton gradient across the membrane. The catalytic sites are hosted primarily by the beta subunits. This is ATP synthase subunit beta, chloroplastic from Agrostis stolonifera (Creeping bentgrass).